The sequence spans 323 residues: Macrolide efflux protein A (323 aa).

9 consecutive transmembrane segments (helical) span residues 6 to 26, 51 to 71, 105 to 125, 128 to 148, 182 to 202, 219 to 239, 245 to 265, 270 to 290, and 303 to 323; these read VLSM…AIGV, LTIV…VLFI, SLQS…YSVW, NAII…VLIV, FALL…NALF, ITEI…GLFG, ILLI…SGLL, FFIF…YSGV, and YLGR…PIGL.

It belongs to the major facilitator superfamily. Drug:H(+) antiporter-3 (DHA3) (TC 2.A.1.21) family.

The protein resides in the cell membrane. In terms of biological role, confers resistance to 14-membered macrolides including erythromycin and to 15-membered macrolides but not to 16-membered macrolides, lincosamides or analogs of streptogramin B. May function as an efflux pump to regulate intracellular macrolide levels. This chain is Macrolide efflux protein A (mefA), found in Enterococcus faecalis (Streptococcus faecalis).